The chain runs to 168 residues: Auxin-responsive protein IAA1 (168 aa).

Positions 1-74 (MEVTNGLNLK…NRKNNNNKNV (74 aa)) are disordered. Positions 14-18 (LRLGL) match the EAR-like (transcriptional repression) motif. Residues 23–34 (EEQQLELSCVRS) show a composition bias toward polar residues. The PB1 domain maps to 74–161 (VSYVKVSMDG…SCQKLRIMKG (88 aa)).

Belongs to the Aux/IAA family. As to quaternary structure, homodimers and heterodimers. Interacts with the auxin-responsive protein IAA2. Interacts with TPL. Phosphorylated by phytochrome A in vitro. Preferentially expressed in stems, leaves and flowers.

It localises to the nucleus. Aux/IAA proteins are short-lived transcriptional factors that function as repressors of early auxin response genes at low auxin concentrations. Repression is thought to result from the interaction with auxin response factors (ARFs), proteins that bind to the auxin-responsive promoter element (AuxRE). Formation of heterodimers with ARF proteins may alter their ability to modulate early auxin response genes expression. This chain is Auxin-responsive protein IAA1 (IAA1), found in Arabidopsis thaliana (Mouse-ear cress).